Reading from the N-terminus, the 216-residue chain is MVLLTEEDYSDLNEDYFNDLADTLFNKCYLVANGSKWRLVEIEFYLNNENHADPYVHCDPDQLLSHTFYFHRFKNRTYKSGTFKGMDITLGTYPNDPKFKPKKTDTKTYFGILIRSVQRIKTGEIIEGPCNTVNKLLEQYEFTKIDELTGGESLDLFENDQNFYLKFTKSLKSEKIYSGPRIGLSDKFMEWRDLPYRYVIFKSSIKKRKTTLKELN.

This is an uncharacterized protein from Acanthamoeba polyphaga mimivirus (APMV).